Here is a 513-residue protein sequence, read N- to C-terminus: Activin receptor type-2A (513 aa).

An N-terminal signal peptide occupies residues 1–19 (MGAAAKLAFAVFLISCSSG). The Extracellular segment spans residues 20–135 (AILGRSETQE…TSNPVTPKPP (116 aa)). Disulfide bonds link C30/C60, C50/C78, C85/C104, C91/C103, and C105/C110. N-linked (GlcNAc...) asparagine glycosylation is found at N43 and N66. The helical transmembrane segment at 136 to 161 (YYNILLYSLVPLMLIAGIVICAFWVY) threads the bilayer. The Cytoplasmic portion of the chain corresponds to 162-513 (RHHKMAYPPV…VDFPPKESSL (352 aa)). The region spanning 192–485 (LQLLEVKARG…GERITQMQRL (294 aa)) is the Protein kinase domain. Residues 198 to 206 (KARGRFGCV) and K219 contribute to the ATP site. Catalysis depends on D322, which acts as the Proton acceptor.

Belongs to the protein kinase superfamily. TKL Ser/Thr protein kinase family. TGFB receptor subfamily. Part of a complex consisting of MAGI2/ARIP1, ACVR2A, ACVR1B and SMAD3. Interacts with MAGI2/ARIP1. Interacts with type I receptor ACVR1. Interacts with BMP7. Interacts with TSC22D1/TSC-22. Interacts with activin A/INHBA. Mg(2+) serves as cofactor. The cofactor is Mn(2+).

The protein localises to the cell membrane. It carries out the reaction L-threonyl-[receptor-protein] + ATP = O-phospho-L-threonyl-[receptor-protein] + ADP + H(+). It catalyses the reaction L-seryl-[receptor-protein] + ATP = O-phospho-L-seryl-[receptor-protein] + ADP + H(+). In terms of biological role, on ligand binding, forms a receptor complex consisting of two type II and two type I transmembrane serine/threonine kinases. Type II receptors phosphorylate and activate type I receptors which autophosphorylate, then bind and activate SMAD transcriptional regulators. Receptor for activin A, activin B and inhibin A. Mediates induction of adipogenesis by GDF6. The protein is Activin receptor type-2A of Homo sapiens (Human).